The primary structure comprises 155 residues: Cyanate hydratase (155 aa).

Catalysis depends on residues Arg-95, Glu-98, and Ser-121.

It belongs to the cyanase family.

It catalyses the reaction cyanate + hydrogencarbonate + 3 H(+) = NH4(+) + 2 CO2. Catalyzes the reaction of cyanate with bicarbonate to produce ammonia and carbon dioxide. This Pseudomonas syringae pv. syringae (strain B728a) protein is Cyanate hydratase.